The primary structure comprises 291 residues: ATP synthase gamma chain (291 aa).

It belongs to the ATPase gamma chain family. In terms of assembly, F-type ATPases have 2 components, CF(1) - the catalytic core - and CF(0) - the membrane proton channel. CF(1) has five subunits: alpha(3), beta(3), gamma(1), delta(1), epsilon(1). CF(0) has three main subunits: a, b and c.

It is found in the cell inner membrane. In terms of biological role, produces ATP from ADP in the presence of a proton gradient across the membrane. The gamma chain is believed to be important in regulating ATPase activity and the flow of protons through the CF(0) complex. The chain is ATP synthase gamma chain from Syntrophus aciditrophicus (strain SB).